We begin with the raw amino-acid sequence, 177 residues long: MKLPKEGDFITIQSYKHDGEIHRTWRDTMVLKTTENAIIGVNNHTLVTENDGRRWVTREPAIVYFHKKYWFNIIAMIRENGVSYYCNLASPYVLDNEALKYIDYDLDVKVFADGEKRLLDVDEYERHRKAMKYSDDIDFILKENVKILVDWINNQRGPFSPAYVNIWYKRYLELRSR.

The active-site Proton donor is the R23. N87, D103, D105, D107, D120, and E123 together coordinate Mg(2+).

It belongs to the Ntdp family. The cofactor is Mg(2+).

It catalyses the reaction a ribonucleoside 5'-triphosphate + H2O = a ribonucleoside 5'-diphosphate + phosphate + H(+). The catalysed reaction is a ribonucleoside 5'-diphosphate + H2O = a ribonucleoside 5'-phosphate + phosphate + H(+). Has nucleoside phosphatase activity towards nucleoside triphosphates and nucleoside diphosphates. This is Nucleoside triphosphate/diphosphate phosphatase from Streptococcus suis (strain 98HAH33).